Here is a 247-residue protein sequence, read N- to C-terminus: ATP synthase subunit a, chloroplastic (247 aa).

5 consecutive transmembrane segments (helical) span residues 38–58, 95–115, 134–154, 199–219, and 220–240; these read QVLI…IIAV, VPFI…GALL, INTT…AGLS, LVVV…VMFL, and GLFT…AYIG.

This sequence belongs to the ATPase A chain family. As to quaternary structure, F-type ATPases have 2 components, CF(1) - the catalytic core - and CF(0) - the membrane proton channel. CF(1) has five subunits: alpha(3), beta(3), gamma(1), delta(1), epsilon(1). CF(0) has four main subunits: a, b, b' and c.

It is found in the plastid. The protein resides in the chloroplast thylakoid membrane. Functionally, key component of the proton channel; it plays a direct role in the translocation of protons across the membrane. In Oryza nivara (Indian wild rice), this protein is ATP synthase subunit a, chloroplastic.